We begin with the raw amino-acid sequence, 177 residues long: Alkyl hydroperoxide reductase AhpD (177 aa).

The active-site Proton donor is the C131. An intrachain disulfide couples C131 to C134. C134 functions as the Cysteine sulfenic acid (-SOH) intermediate in the catalytic mechanism.

This sequence belongs to the AhpD family.

The enzyme catalyses N(6)-[(R)-dihydrolipoyl]-L-lysyl-[lipoyl-carrier protein] + a hydroperoxide = N(6)-[(R)-lipoyl]-L-lysyl-[lipoyl-carrier protein] + an alcohol + H2O. In terms of biological role, antioxidant protein with alkyl hydroperoxidase activity. Required for the reduction of the AhpC active site cysteine residues and for the regeneration of the AhpC enzyme activity. This Solibacter usitatus (strain Ellin6076) protein is Alkyl hydroperoxide reductase AhpD.